We begin with the raw amino-acid sequence, 108 residues long: Nucleoid-associated protein Pmen_2646 (108 aa).

The tract at residues 1–25 is disordered; it reads MMKGGMAGLMKQAQQMQEKMQKMQE.

This sequence belongs to the YbaB/EbfC family. As to quaternary structure, homodimer.

The protein resides in the cytoplasm. The protein localises to the nucleoid. In terms of biological role, binds to DNA and alters its conformation. May be involved in regulation of gene expression, nucleoid organization and DNA protection. This Ectopseudomonas mendocina (strain ymp) (Pseudomonas mendocina) protein is Nucleoid-associated protein Pmen_2646.